The sequence spans 219 residues: tRNA (guanine-N(7)-)-methyltransferase (219 aa).

Residues Glu-44, Asp-69, Glu-102, and Asn-125 each contribute to the S-adenosyl-L-methionine site. Lys-129 and Asp-161 together coordinate substrate.

It belongs to the class I-like SAM-binding methyltransferase superfamily. TrmB family.

The catalysed reaction is guanosine(46) in tRNA + S-adenosyl-L-methionine = N(7)-methylguanosine(46) in tRNA + S-adenosyl-L-homocysteine. The protein operates within tRNA modification; N(7)-methylguanine-tRNA biosynthesis. Functionally, catalyzes the formation of N(7)-methylguanine at position 46 (m7G46) in tRNA. This is tRNA (guanine-N(7)-)-methyltransferase from Clostridium perfringens (strain SM101 / Type A).